A 562-amino-acid chain; its full sequence is Abrin-c (562 aa).

The first 34 residues, Met-1–Asn-34, serve as a signal peptide directing secretion. Residue Gln-35 is modified to Pyrrolidone carboxylic acid. The active site involves Glu-198. Asn-234 is a glycosylation site (N-linked (GlcNAc...) asparagine). 3 disulfides stabilise this stretch: Cys-281–Cys-303, Cys-320–Cys-339, and Cys-363–Cys-380. Residues Tyr-307–Gly-434 form the Ricin B-type lectin 1 domain. The 1-alpha repeat unit spans residues Asp-317–Ser-359. A 1-beta repeat occupies Asn-360–Asn-400. N-linked (GlcNAc...) asparagine glycosylation is found at Asn-395 and Asn-435. One copy of the 1-gamma repeat lies at Ser-403 to Asn-435. Positions Thr-437–Leu-561 constitute a Ricin B-type lectin 2 domain. The 2-alpha repeat unit spans residues Ser-448–Ser-483. Intrachain disulfides connect Cys-451–Cys-464 and Cys-490–Cys-507. Residues Thr-487–Asn-526 form a 2-beta repeat. One copy of the 2-gamma repeat lies at Asp-529–Phe-562.

It in the N-terminal section; belongs to the ribosome-inactivating protein family. Type 2 RIP subfamily. Disulfide-linked dimer of A and B chains.

It carries out the reaction Endohydrolysis of the N-glycosidic bond at one specific adenosine on the 28S rRNA.. In terms of biological role, the A chain is responsible for inhibiting protein synthesis through the catalytic inactivation of 60S ribosomal subunits by removing adenine from position 4,324 of 28S rRNA. Abrin-a is more toxic than ricin. Its function is as follows. The B chain is a galactose-specific lectin that facilitates the binding of abrin to the cell membrane that precedes endocytosis. The polypeptide is Abrin-c (Abrus precatorius (Indian licorice)).